The primary structure comprises 629 residues: DNA mismatch repair protein MutL (629 aa).

It belongs to the DNA mismatch repair MutL/HexB family.

Functionally, this protein is involved in the repair of mismatches in DNA. It is required for dam-dependent methyl-directed DNA mismatch repair. May act as a 'molecular matchmaker', a protein that promotes the formation of a stable complex between two or more DNA-binding proteins in an ATP-dependent manner without itself being part of a final effector complex. The protein is DNA mismatch repair protein MutL of Haemophilus influenzae (strain PittGG).